The primary structure comprises 309 residues: Uridylate-specific endoribonuclease C (309 aa).

The signal sequence occupies residues 1–22; the sequence is MASGYDFGWIPVLLSLFTLTDA. An EndoU domain is found at 27 to 303; that stretch reads VNQELSNIFN…IGTAYPKLLS (277 aa). N-linked (GlcNAc...) asparagine glycans are attached at residues Asn-53 and Asn-121. Catalysis depends on residues His-181, His-197, and Lys-242.

The protein belongs to the ENDOU family. In terms of assembly, monomer. Mn(2+) is required as a cofactor.

Its subcellular location is the secreted. The enzyme catalyses ribonucleotidyl-uridine-RNA = a 5'-end dephospho-uridine-RNA + a 3'-end 2',3'-cyclophospho-ribonucleotide-RNA. Functionally, endoribonuclease that cleaves single-stranded RNAs at 5' of uridylates and releases a product with a 2',3'-cyclic phosphate at the 3'-end. The UU and GU sites are more efficiently cleaved than CU and AU sites. The protein is Uridylate-specific endoribonuclease C (endouc) of Danio rerio (Zebrafish).